The following is a 525-amino-acid chain: Mitochondrial-processing peptidase subunit alpha (525 aa).

A mitochondrion-targeting transit peptide spans 1 to 33 (MAAVVLAATRLLRGSGSWGCSRLRFGPPAYRRF). N6-succinyllysine is present on Lys-64. Residue Lys-299 is modified to N6-acetyllysine.

The protein belongs to the peptidase M16 family. In terms of assembly, heterodimer of PMPCA (alpha) and PMPCB (beta) subunits, forming the mitochondrial processing protease (MPP) in which PMPCA is involved in substrate recognition and binding and PMPCB is the catalytic subunit. Ubiquitously expressed with highest expression in fetal tissues and adult brain, cerebellum and cerebellar vermis.

It is found in the mitochondrion matrix. The protein resides in the mitochondrion inner membrane. In terms of biological role, substrate recognition and binding subunit of the essential mitochondrial processing protease (MPP), which cleaves the mitochondrial sequence off newly imported precursors proteins. This Homo sapiens (Human) protein is Mitochondrial-processing peptidase subunit alpha (PMPCA).